The following is a 126-amino-acid chain: Glycine cleavage system H protein (126 aa).

A Lipoyl-binding domain is found at 23-104 (TLTVGITDHA…PYESWLFKIK (82 aa)). K64 carries the N6-lipoyllysine modification.

Belongs to the GcvH family. The glycine cleavage system is composed of four proteins: P, T, L and H. (R)-lipoate is required as a cofactor.

The glycine cleavage system catalyzes the degradation of glycine. The H protein shuttles the methylamine group of glycine from the P protein to the T protein. This is Glycine cleavage system H protein from Paraburkholderia xenovorans (strain LB400).